Consider the following 306-residue polypeptide: ATP phosphoribosyltransferase (306 aa).

The protein belongs to the ATP phosphoribosyltransferase family.

The protein resides in the cytoplasm. It carries out the reaction 1-(5-phospho-beta-D-ribosyl)-ATP + diphosphate = 5-phospho-alpha-D-ribose 1-diphosphate + ATP. Its pathway is amino-acid biosynthesis; L-histidine biosynthesis; L-histidine from 5-phospho-alpha-D-ribose 1-diphosphate: step 1/9. Its function is as follows. Catalyzes the condensation of ATP and 5-phosphoribose 1-diphosphate to form N'-(5'-phosphoribosyl)-ATP (PR-ATP). Has a crucial role in the pathway because the rate of histidine biosynthesis seems to be controlled primarily by regulation of the enzymatic activity. The sequence is that of ATP phosphoribosyltransferase (HIS1) from Candida glabrata (strain ATCC 2001 / BCRC 20586 / JCM 3761 / NBRC 0622 / NRRL Y-65 / CBS 138) (Yeast).